Here is a 452-residue protein sequence, read N- to C-terminus: MSGEEKEKVKILHVANISTSATRDHIYNMFNYLGKIQDLKVYPSEGNITANTLLKTAFIKFDDERCVEVAQHLTNTVVIDCAIVCLPYPNPVIPDEESFFNSGGSTTAGQRQLPPHVTNKIQESDDGSALLITVDPTLEQLGLPAYPPLPADTDSAKVEEIRRTVYVGNLPKGVDGNEVLELFNMYFGEVMYARMASGPDALPCAYAYVEFSQQASVCNALQNDGFEFKERPLKIQHSRVAIIKPQAKTDEQALGEIEEAIRMGRNGDDRDRRRSRSPRRRRSPSPRRRRDSRDRDRDRDRDRRRSRDRRSRSRDRDRDRDRKRSRSRDRKRRSRSRDNKDRDRKRSRSRDRRRRSKSRDRKRERSRSRSKDRKRDKKRSRSRSPEKRRDKEDRKTEKKENENESSLREKLLEKKAARKDSSDDEWEEKPTPTNGEVKNEEIGNGDVVMASE.

RRM domains are found at residues 10 to 91 (KILH…YPNP) and 163 to 240 (RTVY…HSRV). The interval 258–452 (EEAIRMGRNG…GNGDVVMASE (195 aa)) is disordered. A compositionally biased stretch (basic and acidic residues) spans 259–272 (EAIRMGRNGDDRDR). The span at 273–290 (RRSRSPRRRRSPSPRRRR) shows a compositional bias: basic residues. The segment covering 291-305 (DSRDRDRDRDRDRRR) has biased composition (basic and acidic residues). Composition is skewed to basic residues over residues 323 to 335 (KRSRSRDRKRRSR), 345 to 360 (KRSRSRDRRRRSKSRD), and 370 to 382 (SKDRKRDKKRSRS). Positions 383-421 (RSPEKRRDKEDRKTEKKENENESSLREKLLEKKAARKDS) are enriched in basic and acidic residues.

The protein belongs to the splicing factor SR family. Post-translationally, extensively phosphorylated on serine residues in the RS domain.

It localises to the nucleus. The protein is Probable splicing factor, arginine/serine-rich 7 (rsp-7) of Caenorhabditis elegans.